The primary structure comprises 155 residues: Large ribosomal subunit protein uL13 (155 aa).

This sequence belongs to the universal ribosomal protein uL13 family. Part of the 50S ribosomal subunit.

In terms of biological role, this protein is one of the early assembly proteins of the 50S ribosomal subunit, although it is not seen to bind rRNA by itself. It is important during the early stages of 50S assembly. The sequence is that of Large ribosomal subunit protein uL13 from Rickettsia rickettsii (strain Iowa).